The sequence spans 264 residues: Movement protein (264 aa).

A disordered region spans residues 221–264 (YRSRSQSVSGRGKRHSKPPNRRLDSASEESSSVSFDDGLQSDHT). Residues 231–240 (RGKRHSKPPN) are compositionally biased toward basic residues.

Belongs to the tobamovirus movement protein family.

Its subcellular location is the host cytoplasm. The protein localises to the host cytoskeleton. It is found in the host cell junction. It localises to the host plasmodesma. Transports viral genome to neighboring plant cells directly through plasmosdesmata, without any budding. The movement protein allows efficient cell to cell propagation, by bypassing the host cell wall barrier. Forms a ribonucleoprotein complex with viral RNA. Binds microtubules and modulates microtubule stability. Can bind double-stranded DNA. This chain is Movement protein (MP), found in Citrullus (Cucumber).